We begin with the raw amino-acid sequence, 489 residues long: Cytochrome P450-DIT2 (489 aa).

Position 435 (cysteine 435) interacts with heme.

This sequence belongs to the cytochrome P450 family. It depends on heme as a cofactor.

Involved in spore wall maturation. Thought to catalyze the oxidation of tyrosine residues in the formation of LL-dityrosine a precursor of the spore wall. The sequence is that of Cytochrome P450-DIT2 (DIT2) from Saccharomyces cerevisiae (strain ATCC 204508 / S288c) (Baker's yeast).